Consider the following 559-residue polypeptide: Spermidine/putrescine import ATP-binding protein PotA (559 aa).

An ABC transporter domain is found at 7–448; the sequence is IEIEGLNKTF…PKTEWIANFI (442 aa). 40-47 provides a ligand contact to ATP; sequence GPSGCGKT. The insert stretch occupies residues 108–317; that stretch reads WTKLDEIPKL…EAFEKRYLSR (210 aa).

This sequence belongs to the ABC transporter superfamily. Spermidine/putrescine importer (TC 3.A.1.11.1) family. The complex is composed of two ATP-binding proteins (PotA), two transmembrane proteins (PotB and PotC) and a solute-binding protein (PotD).

The protein localises to the cell membrane. The enzyme catalyses ATP + H2O + polyamine-[polyamine-binding protein]Side 1 = ADP + phosphate + polyamineSide 2 + [polyamine-binding protein]Side 1.. Functionally, part of the ABC transporter complex PotABCD involved in spermidine/putrescine import. Responsible for energy coupling to the transport system. This Mycoplasma genitalium (strain ATCC 33530 / DSM 19775 / NCTC 10195 / G37) (Mycoplasmoides genitalium) protein is Spermidine/putrescine import ATP-binding protein PotA.